The chain runs to 81 residues: Small ribosomal subunit protein bS18 (81 aa).

It belongs to the bacterial ribosomal protein bS18 family. As to quaternary structure, part of the 30S ribosomal subunit. Forms a tight heterodimer with protein bS6.

Binds as a heterodimer with protein bS6 to the central domain of the 16S rRNA, where it helps stabilize the platform of the 30S subunit. This is Small ribosomal subunit protein bS18 from Parvibaculum lavamentivorans (strain DS-1 / DSM 13023 / NCIMB 13966).